The primary structure comprises 847 residues: Acyl-homoserine lactone acylase QuiP (847 aa).

An N-terminal signal peptide occupies residues 1-26; the sequence is MASPAFMRFLPRCGAAAAFGTLLGLA. S265 acts as the Nucleophile in catalysis.

Belongs to the peptidase S45 family. In terms of assembly, heterodimer of an alpha subunit and a beta subunit processed from the same precursor.

It localises to the periplasm. The enzyme catalyses an N-acyl-L-homoserine lactone + H2O = L-homoserine lactone + a carboxylate. In terms of biological role, catalyzes the deacylation of acyl-homoserine lactone (AHL or acyl-HSL), releasing homoserine lactone (HSL) and the corresponding fatty acid. Possesses a specificity for the degradation of long-chain acyl-HSLs (side chains of seven or more carbons in length). Appears to be the acyl-HSL acylase that underlies the ability of P.aeruginosa to degrade and utilize certain acyl-HSLs as growth nutrients, including one of its own quorum signals, 3-oxo-C12-HSL. Is thought to have a role in quorum quenching. In Pseudomonas aeruginosa (strain ATCC 15692 / DSM 22644 / CIP 104116 / JCM 14847 / LMG 12228 / 1C / PRS 101 / PAO1), this protein is Acyl-homoserine lactone acylase QuiP (quiP).